The following is a 492-amino-acid chain: Katanin p60 ATPase-containing subunit A1 (492 aa).

Residues 80 to 186 (STPPKASQQE…ESEPKKFDST (107 aa)) form a disordered region. Residues 145–171 (PNDKGKAVRGREKKDQQNKGKEEKSKS) show a composition bias toward basic and acidic residues. 250–257 (GPPGTGKT) contributes to the ATP binding site.

The protein belongs to the AAA ATPase family. Katanin p60 subunit A1 subfamily. In terms of assembly, can homooligomerize into hexameric rings, which may be promoted by interaction with microtubules. Interacts with KATNB1, which may serve as a targeting subunit.

It localises to the cytoplasm. Its subcellular location is the cytoskeleton. The protein resides in the microtubule organizing center. The protein localises to the centrosome. It is found in the spindle pole. It localises to the spindle. It catalyses the reaction n ATP + n H2O + a microtubule = n ADP + n phosphate + (n+1) alpha/beta tubulin heterodimers.. With respect to regulation, ATPase activity is stimulated by microtubules, which promote homooligomerization. ATP-dependent microtubule severing is stimulated by interaction with KATNB1. Functionally, catalytic subunit of a complex which severs microtubules in an ATP-dependent manner. Microtubule severing may promote rapid reorganization of cellular microtubule arrays and the release of microtubules from the centrosome following nucleation. In Gallus gallus (Chicken), this protein is Katanin p60 ATPase-containing subunit A1.